The primary structure comprises 278 residues: Large ribosomal subunit protein uL2 (278 aa).

Disordered regions lie at residues 1–20 and 225–278; these read MGIRKYKPTTPGRRGSSVSD and VMNP…GKKR. Residues 258–278 are compositionally biased toward basic residues; the sequence is RNKKKASSRLIVRRRKSGKKR.

It belongs to the universal ribosomal protein uL2 family. Part of the 50S ribosomal subunit. Forms a bridge to the 30S subunit in the 70S ribosome.

In terms of biological role, one of the primary rRNA binding proteins. Required for association of the 30S and 50S subunits to form the 70S ribosome, for tRNA binding and peptide bond formation. It has been suggested to have peptidyltransferase activity; this is somewhat controversial. Makes several contacts with the 16S rRNA in the 70S ribosome. The protein is Large ribosomal subunit protein uL2 of Cutibacterium acnes (strain DSM 16379 / KPA171202) (Propionibacterium acnes).